Consider the following 107-residue polypeptide: Protein RnfH (107 aa).

Positions 82-107 are disordered; it reads ARRKRAEKAKEEGRANKVTGGRPIER.

The protein belongs to the UPF0125 (RnfH) family.

The protein is Protein RnfH of Pseudoalteromonas translucida (strain TAC 125).